A 148-amino-acid chain; its full sequence is Ubiquitin-conjugating enzyme E2 13 (148 aa).

Residues alanine 2–valine 148 enclose the UBC core domain. The Glycyl thioester intermediate role is filled by cysteine 86.

The protein belongs to the ubiquitin-conjugating enzyme family. In terms of assembly, heterodimer with spm2.

It carries out the reaction S-ubiquitinyl-[E1 ubiquitin-activating enzyme]-L-cysteine + [E2 ubiquitin-conjugating enzyme]-L-cysteine = [E1 ubiquitin-activating enzyme]-L-cysteine + S-ubiquitinyl-[E2 ubiquitin-conjugating enzyme]-L-cysteine.. The protein operates within protein modification; protein ubiquitination. Its function is as follows. Has a role in the DNA error-free postreplication repair (PRR) pathway. The ubc13/spm2 heterodimer catalyzes the synthesis of non-canonical poly-ubiquitin chains that are linked through 'Lys-63'. The polypeptide is Ubiquitin-conjugating enzyme E2 13 (ubc13) (Schizosaccharomyces pombe (strain 972 / ATCC 24843) (Fission yeast)).